The chain runs to 80 residues: Large ribosomal subunit protein bL31B (80 aa).

It belongs to the bacterial ribosomal protein bL31 family. Type B subfamily. Part of the 50S ribosomal subunit.

The sequence is that of Large ribosomal subunit protein bL31B from Exiguobacterium sp. (strain ATCC BAA-1283 / AT1b).